A 78-amino-acid polypeptide reads, in one-letter code: Acyl carrier protein (78 aa).

One can recognise a Carrier domain in the interval Met1–Leu77. Ser37 carries the O-(pantetheine 4'-phosphoryl)serine modification.

This sequence belongs to the acyl carrier protein (ACP) family. 4'-phosphopantetheine is transferred from CoA to a specific serine of apo-ACP by AcpS. This modification is essential for activity because fatty acids are bound in thioester linkage to the sulfhydryl of the prosthetic group.

It localises to the cytoplasm. The protein operates within lipid metabolism; fatty acid biosynthesis. Carrier of the growing fatty acid chain in fatty acid biosynthesis. In Porphyromonas gingivalis (strain ATCC 33277 / DSM 20709 / CIP 103683 / JCM 12257 / NCTC 11834 / 2561), this protein is Acyl carrier protein.